Here is a 4753-residue protein sequence, read N- to C-terminus: MVPEERRVGLSSDETSSDSLKSWHSICVLDSKEQPLACQQKQRQFVKPVTESEQPTVLELLLAELRTLFSAVLQDSSPAAWRYLHAVLGLLPPYRELLVGHLDLLPFLEQLYCWAPWVQTHLHLDLLGAIVQAFPPDSSLLDSASHADCCPQKRRLHHRPPCPACPFVQAQWSRQQVKEELATWLRPLTLPELQRCLGIVGAQVALEEAVWLDGLSLLPLALAADIPVRYESSDTDNAEVEPVGRKETRSQLDYEVPREKAFQKSSTGFSPETSFLDSQVMTALKMERYLKKIHFLYLNVAPSRYFRPYSLMVVPPDKVNPEHYIFSPFGILHVHPVEGSETMTLGTWHHHCVLWQQLQFIPFFKYCLLRKSFTCWKKNVRLQGLHRLQKFLENHLLLAVPHFGAGLLHISRLLQELHSVSWLPQELDRCYELLDLQTALAEEKHKALRLLHRCLNLCTSILRLVHEDTYHMQQCLQERVQNCDRIRTGQGSIYLQRVQHKQLEQKLKQAEAWWLQLGKFARLVDYMICQSLISVLEEQITSFVANILQAPRQKPFLSSQLVFDDHGQLSHVPCVENMIQTLTGGLQSVKTSALQVVQSADLKTSSDSLYSEEEDEEEDSKDEFLMPKFQGQPSDAVSIFCGPNVGLVWPWKSHPIAGILEVRGCRLRGQYFPHNYKQLEEDLDNNPKIQQALNIQQVLLEGVLCKVQEFCREHHWITGIYEFLQSWGPQKLEDMRGGPIKNYVTLVSRLNVWQARVSSMPIELLTKGGLLLLSCHDVQAEMESKLNSIRKDILAHVQNECWNLSQQLMTELTDFMHIFRTINSDIHAIAQCTQKLNEANEQYVELEERMEYVRALHELIRNHFSLFSAENEALDISVRRQFGESPIPPCPPPPQPHLLHCPLLAPQLLDMWEAFQFEKSQASEFLLSKRHAIMPKLQQLMAAALAELEGLLAKALSGPFMDPTQDQRSTEHQLVSLERQFQNTVSDLSELHHAYAIFTEDETPVPLPICGTRPIVQQQRIWHLYRVISENISEWKCMAFAKFSPAMAQEKTEGWLTEAARMSTTLELHSPVLQHCMRILGEFRSYLPLLTKLGSLHPQSLNCQCLLRALGLGSLQTIELLTLGQLLTYPLLEFADRINQVWQNENERIHAQETIRRLQRYWEARQLRLLNFILHVPYEPPASERSKRQVLRSPQWEVVDKDSGTFILSDYSNLQDSIQESLQVLSKILAIEKSGDLNKIALEWVAIMHGLGALLEVWLTFQQKWIFLNKVLHEMKIQFPNADLNSRFKVMDDQYRTLMRISVADPMVLSLVVPSAERSPYFQGQQLQQLLQAGSVELEGIIMSLESVLYGVCAHFPRLFFLSDSELVALLAARLESCEAQLWVRRCFPHVHAVSFRSCPTGEKNTDDWESSPNTQTQVEALAVLGAGGEEVKLQGPLPLHPDLPKWLASLEKCLRLALVHMLQGCVAARLARGPSLGEALKQLPKQNKLYLQLYVQHWIDLVQAFPWQCVLVAEEVVWRAEMEEALLEWGTLAMVSMHMRKLEVLVNFMRAQRASQGGQSLPSVRQTSLLSALLVMAVTHRDIAQLLEQHQVSDLTDFHWVRQLKYHLGSPHIIPKSPLQSLKTIASSEPSLSPAACWIDVLGRSFLYNYEYLGPRLGPLPSLLPERPALVLLLALEEVACGTVLGPNGVGKRAIVNSLAQALGRQLVMLPCSPQIEAQCLSNYLNGALQGGAWLLLEKVHQLPPGLLSALGQRLGELHHLYAPLYQEASRNTSTIDPTQPQLLGSSFFEKHHVSVRLGYGCLLVLRALSSAVPANLHLLLRPVALALPDLRQVAELTLLGAGMRDAFQMATRLSKFFSLERELVSGPLPCRLPLLKQILEDTIRTLNVTKEEPKCQKPRSLAAIEEAALLRSPLFSILNGLHLHNLRGLLCALFPSASQVLAEPMTYKLMKPLVVEELQQVGLDPSPDILGSLEQLSQALSRASGILLLGPAGSGKTTCWHSLFKIQNRLAAMEDTSTQGCQPVEITHLYPSGLSPQEFLGWLEGSCWHHGIFPKVLRAAGQCNNMGQKRQTEESIGIQHWIICDGASNGAWLDSITCLLSELPQLSLPSGQQIARPPGTFLLMEVADTTGISPTVVGCCALVWCGGEQTWQCILSALMASLPYEYRLQHRTVAELNHMAEVLVPATLRFLTCQGVSSLLQVHGQQAVCAGVAEVTSMARILHSLLDLHLRLKEEKAPGPEDLSYSDPVAQSFRSSKSSFLNRSQVDSDDVPDKCREHLLAVSSFLFALIWGFGAHLPSRFWPIFDTFIRDSISRLSNYPEPPPSALVFDLHVSPEDGTLVPFTGQYLSSHIKGTLGTFHPSIQTERLLYVVDLLLSGGQPVLLAGEAATGKSAFVEVLVEPHHPYIYSPIHPAFSSSHLRLLLSRGIQGQTQASPQPGHHQDSKPSLLFLLEDLHLATSDPEKSCQPVLETLRQAMDGTVYAHSTLELQTLQPTVNFLATVTVPGYCERPLCPRLFRLFTVLALESMTQATLLERHVPIIQAWLERFPSVERERALARGLVRASVEAWEAVCNCFMPSPLHPHYHFSLHSVSHLLSSLQLLPNRTGSRGFVDYPNHQEHLRRVSGLRGTCLTVMMATRNVVRLWLHEAQRTFCDRLDSPRERSYCAKLLLVVAQSVFCCGPGPQHLGKDHQESEEEEEEERVPEVESEGELAQWEDFSNSNSETEEEEEPYGLQVARVSNSRDPSLTPSIGPVSRGMKESISHKIRQEKGTRASNYRLQVRRSFKTWWQKKPQMDLISPLLLPVLLLHPQEKPSDLVFSQELILGPNSETPNLYLERQWEKLEEQLATSAAQLKLSPHLARCHSMAQHVARLVRVLARPRQHGLLLSGALGTGRHTAITLASSICQAHFFHLPSGSEEAILQCLRDASWHAGMLSQPVALLVPSGVDLTTLHRLLALATSGSFPGQYTEADLDRIGEHLPRENLGVKQNIKKEMVLQRFHQQVCSHLHLFFLIGDKQAHKQLPSTLFLRLLQLATASIDRYEPWDQAALAKVAQHHLEGAQSVPLDDGSWKYPDLQASIPSVAKAMALIHLSATHYHEHLCPALPLVTPKTFLDFLDTFLMLQQQTILKIKNKAQRVQNALENLRMLIKEHGTHANLIFDLEQQLKDSGKSLSMFQQQLEQSKLLYKQQLEECRHQENLIENLARQRDALQAQREAFLEQMSKAFLEPLSQLQVADFEEIRSYRAPPESVVRVTDAMCDLFHHETGWASAKQLLCTEDFYQELVFFPKEKITDSELIKLHLILKAPGMDDAALRAVSRPAASLAAWLWAVLHYGLAHCRGLPTDLLLQQVEATLTREQARLGYYQFQAQETLEHNLALAKMVEDAQASHNCVAKTLSQAQCGQYHKWPMKAALLTPMRAWTTQLQKLKGRCMTVFGDTLLCSAAIIYLGPFPPLRRQELLDEWLALCRGFQEALGPDDVAQALKRKQKSVSIPPKNPLLATHSPFSILSLLSSESEQYQWDGNLKPQAKSAHLAGLLLRSPTHYSSCRWPLLLDPSNEALIWLDPLPLEENRSFAPALTEGRGKGLMRNQKRESKTDMKEEDDESEESNEAEDQTKEQKAEERKNEQEKEQEENEEKEEEKTESQGSKPAYETQLPSLPYLSVLSGADPELGSQLQEAAACGLPVLLTNVELGLGCEELQWLLQREQLSPPQVQPGFCLYLSTTLSLCAMEKVLGCELLKGLNVLDLGLNMEILEEQMLHEILCREYPELETRWQDLKIRALDTCKAVEAAEERLLTMLLFQNPKRQKPAKFLRNIVRAQGKLCQLRAHCEELEGQKLQEMVLWAPYRPVVWHGMAMVKALSQLQNLLPLFCMSPENWLAVTKQALDSMKPREINHGEDLASHLLQLRAHLTRQLLGSTVTALGLTQVPLVGALGALALLQATGKASELERLALWPGLAASPSTVHSKPVSDVARPAWLGPKAWHECEMLELLPPFVGLCASLAGHSSAWQAYLSLSSTVLGPAPGPGPEPLSLLQKLILWRVLRPECLAGALADFTTSLLGRPLDENTYAPTMPFKHSQATQPMLILLPPPGHPSATLHPLTVIQKLAAKYQQGQKQLQVIALGSEAWDPVSVVVSTLSQAMYEGHWLVLDNCHLMPHWPKELLQLLLELLGRAKVVADLESEQLLDQPESRNVSTVHRDFRLWLIVPAESSASLPAVLTQHSMPVFWNQSLELGHVLIDSVELAQQVLYMQPPTQALPLLLLHGLLLHRQLYGTRLQAHRGRWSQVTLTQVLQTQDQLWASLSNPRAAMQELAASVFYGGPLGDTEDREALISLTQACLSPSSGSWVQPHTPQSLLATLMPLPELRELDAMAECKAQMHLLPSPPEPRLCGLSEGPQAWLLRRQSRALLSALQRSSPVWVPESRRGAQLAERRLRQRLVQVNRRLESLQDLLTHVIRQDESDAPWSVLGPNARRPLEGVLETEALELSQLVGTLQRDLDCLLQQLKGAPPCPSRRCAAVAHALWTGRLPLPWRPHAPAGPQPPWHWLRQLSRRGQLLVRYLGVGADASSDVPERVFHLSAFRHPRRLLLALRGEAALDQNVPSSNFPGSRGSVSSQLQYKRLEMNSNPLHFRVENGPNPTVPERGLLLIGLQVLHAEWDPIAGALQDSPSSQPSPLPPVSISTQAPGTSDLPAPADLTVYSCPVYMGGPLGTAKLQSRNIVMHLPLPTKLTPNTCVQRRVHVCSPPLS.

Coiled coils occupy residues 826–858 and 936–991; these read IHAI…ALHE and KLQQ…LSEL. The segment at 2688 to 2766 is disordered; that stretch reads HLGKDHQESE…SRGMKESISH (79 aa). The segment covering 2695–2712 has biased composition (acidic residues); sequence ESEEEEEEERVPEVESEG. The segment covering 2740 to 2751 has biased composition (polar residues); the sequence is RVSNSRDPSLTP. 3 coiled-coil regions span residues 3125-3227, 3590-3651, and 4431-4460; these read LQQQ…MSKA, MRNQ…QGSK, and GAQL…LTHV. Residues 3580–3657 form a disordered region; it reads ALTEGRGKGL…QGSKPAYETQ (78 aa). Over residues 3602–3615 the composition is skewed to acidic residues; it reads KEEDDESEESNEAE. Positions 3616 to 3631 are enriched in basic and acidic residues; that stretch reads DQTKEQKAEERKNEQE. Over residues 3632–3641 the composition is skewed to acidic residues; it reads KEQEENEEKE. A disordered region spans residues 4669-4697; that stretch reads ALQDSPSSQPSPLPPVSISTQAPGTSDLP.

The protein belongs to the dynein heavy chain family. Expressed in spermatozoa (at protein level).

It localises to the cell projection. The protein localises to the cilium. It is found in the flagellum. Essential for the normal assembly and function of sperm flagella axonemes. This Homo sapiens (Human) protein is Dynein heavy chain domain-containing protein 1 (DNHD1).